A 530-amino-acid polypeptide reads, in one-letter code: Light-harvesting complex I LH38 proteins (530 aa).

Its subcellular location is the plastid. The protein localises to the chloroplast. The chain is Light-harvesting complex I LH38 proteins from Euglena gracilis.